Consider the following 177-residue polypeptide: Large ribosomal subunit protein uL6 (177 aa).

The protein belongs to the universal ribosomal protein uL6 family. As to quaternary structure, part of the 50S ribosomal subunit.

This protein binds to the 23S rRNA, and is important in its secondary structure. It is located near the subunit interface in the base of the L7/L12 stalk, and near the tRNA binding site of the peptidyltransferase center. This chain is Large ribosomal subunit protein uL6, found in Halorhodospira halophila (strain DSM 244 / SL1) (Ectothiorhodospira halophila (strain DSM 244 / SL1)).